The primary structure comprises 380 residues: Beta sliding clamp (380 aa).

It belongs to the beta sliding clamp family. As to quaternary structure, forms a ring-shaped head-to-tail homodimer around DNA which binds and tethers DNA polymerases and other proteins to the DNA. The DNA replisome complex has a single clamp-loading complex (3 tau and 1 each of delta, delta', psi and chi subunits) which binds 3 Pol III cores (1 core on the leading strand and 2 on the lagging strand) each with a beta sliding clamp dimer. Additional proteins in the replisome are other copies of gamma, psi and chi, Ssb, DNA helicase and RNA primase.

Its subcellular location is the cytoplasm. Confers DNA tethering and processivity to DNA polymerases and other proteins. Acts as a clamp, forming a ring around DNA (a reaction catalyzed by the clamp-loading complex) which diffuses in an ATP-independent manner freely and bidirectionally along dsDNA. Initially characterized for its ability to contact the catalytic subunit of DNA polymerase III (Pol III), a complex, multichain enzyme responsible for most of the replicative synthesis in bacteria; Pol III exhibits 3'-5' exonuclease proofreading activity. The beta chain is required for initiation of replication as well as for processivity of DNA replication. In Lactococcus lactis subsp. lactis (strain IL1403) (Streptococcus lactis), this protein is Beta sliding clamp (dnaN).